Consider the following 207-residue polypeptide: Small ribosomal subunit protein uS2 (207 aa).

This sequence belongs to the universal ribosomal protein uS2 family.

The protein is Small ribosomal subunit protein uS2 of Pyrobaculum islandicum (strain DSM 4184 / JCM 9189 / GEO3).